The chain runs to 88 residues: Phosphocarrier protein HPr (88 aa).

One can recognise an HPr domain in the interval Met1–Ile88. His15 acts as the Pros-phosphohistidine intermediate in catalysis. Ser47 carries the phosphoserine; by HPrK/P modification.

This sequence belongs to the HPr family.

The protein resides in the cytoplasm. Phosphorylation on Ser-47 inhibits the phosphoryl transfer from enzyme I to HPr. General (non sugar-specific) component of the phosphoenolpyruvate-dependent sugar phosphotransferase system (sugar PTS). This major carbohydrate active-transport system catalyzes the phosphorylation of incoming sugar substrates concomitantly with their translocation across the cell membrane. The phosphoryl group from phosphoenolpyruvate (PEP) is transferred to the phosphoryl carrier protein HPr by enzyme I. Phospho-HPr then transfers it to the PTS EIIA domain. In terms of biological role, P-Ser-HPr interacts with the catabolite control protein A (CcpA), forming a complex that binds to DNA at the catabolite response elements cre, operator sites preceding a large number of catabolite-regulated genes. Thus, P-Ser-HPr is a corepressor in carbon catabolite repression (CCR), a mechanism that allows bacteria to coordinate and optimize the utilization of available carbon sources. P-Ser-HPr also plays a role in inducer exclusion, in which it probably interacts with several non-PTS permeases and inhibits their transport activity. This Mycoplasma pneumoniae (strain ATCC 29342 / M129 / Subtype 1) (Mycoplasmoides pneumoniae) protein is Phosphocarrier protein HPr (ptsH).